The following is a 353-amino-acid chain: Suppressor of RNA-mediated gene silencing (353 aa).

It belongs to the phytoreovirus non-structural protein 10 family.

Its function is as follows. Suppressor of RNA-mediated gene silencing, also known as post-transcriptional gene silencing (PTGS), a mechanism of plant viral defense that limits the accumulation of viral RNAs. This chain is Suppressor of RNA-mediated gene silencing, found in Alopecurus aequalis (Barnyard grass).